Here is a 258-residue protein sequence, read N- to C-terminus: Hemin import ATP-binding protein HmuV (258 aa).

The 238-residue stretch at 1-238 (MLDIDVSNLS…DILERTYRTP (238 aa)) folds into the ABC transporter domain. Residue 34–41 (GENGAGKS) coordinates ATP.

The protein belongs to the ABC transporter superfamily. Heme (hemin) importer (TC 3.A.1.14.5) family. As to quaternary structure, the complex is composed of two ATP-binding proteins (HmuV), two transmembrane proteins (HmuU) and a solute-binding protein (HmuT).

It localises to the cell inner membrane. Its function is as follows. Part of the ABC transporter complex HmuTUV involved in hemin import. Responsible for energy coupling to the transport system. The polypeptide is Hemin import ATP-binding protein HmuV (Idiomarina loihiensis (strain ATCC BAA-735 / DSM 15497 / L2-TR)).